Consider the following 371-residue polypeptide: Maltose/maltodextrin import ATP-binding protein MalK (371 aa).

The ABC transporter domain maps to 4–234 (VQLQNVTKAW…PADRFVAGFI (231 aa)). Position 36–43 (36–43 (GPSGCGKS)) interacts with ATP.

Belongs to the ABC transporter superfamily. Maltooligosaccharide importer (TC 3.A.1.1.1) family. In terms of assembly, the complex is composed of two ATP-binding proteins (MalK), two transmembrane proteins (MalG and MalK) and a solute-binding protein (MalE).

It localises to the cell inner membrane. It catalyses the reaction D-maltose(out) + ATP + H2O = D-maltose(in) + ADP + phosphate + H(+). In terms of biological role, part of the ABC transporter complex MalEFGK involved in maltose/maltodextrin import. Responsible for energy coupling to the transport system. The sequence is that of Maltose/maltodextrin import ATP-binding protein MalK from Escherichia coli O6:K15:H31 (strain 536 / UPEC).